Here is an 835-residue protein sequence, read N- to C-terminus: Leucine--tRNA ligase (835 aa).

Residues 36-46 carry the 'HIGH' region motif; the sequence is PYPSGKIHVGH. Residues 602-606 carry the 'KMSKS' region motif; sequence KMSKS. K605 is a binding site for ATP.

It belongs to the class-I aminoacyl-tRNA synthetase family.

Its subcellular location is the cytoplasm. It catalyses the reaction tRNA(Leu) + L-leucine + ATP = L-leucyl-tRNA(Leu) + AMP + diphosphate. This Rickettsia massiliae (strain Mtu5) protein is Leucine--tRNA ligase.